Consider the following 521-residue polypeptide: Small ribosomal subunit protein mL104 (rPPR9) (521 aa).

A mitochondrion-targeting transit peptide spans 1–59 (MPPSLPSLQLRRLLLRSFISSSSVNTLQSQPRIISSKPLFSPLPPSRSSIFSTFPSRFF). PPR repeat units follow at residues 174–204 (GGKT…MEND), 210–240 (DKES…TANE), 244–278 (DENI…GFEI), 279–313 (GTKA…LLEM), 321–355 (NTET…GCQP), 356–390 (DAET…GYGE), 393–427 (NKKE…GCKP), and 428–462 (GIKT…GIAV). Over residues 480 to 495 (EVDSNVKKRETLPEKT) the composition is skewed to basic and acidic residues. Residues 480–499 (EVDSNVKKRETLPEKTARKK) form a disordered region. A Nuclear localization signal motif is present at residues 486 to 503 (KKRETLPEKTARKKKRLK).

Belongs to the PPR family. P subfamily. Interacts with NAP1;1 and TCP8. Able to bind mitochondrial RNA in vitro. Component of the mitochondrial ribosome small subunit. In terms of tissue distribution, expressed in root tips, lateral root primordia and leaf primordia. Highly detected in the mature pollen grains.

It is found in the mitochondrion matrix. Its subcellular location is the nucleus. Its function is as follows. RNA-binding protein that functions in both mitochondrion and nucleus. In mitochondrion, it is associated with polysomes and may play a role in translation. Required during embryogenesis. In nucleus, might be involved in the regulation of its own gene expression. The polypeptide is Small ribosomal subunit protein mL104 (rPPR9) (PNM1) (Arabidopsis thaliana (Mouse-ear cress)).